Reading from the N-terminus, the 437-residue chain is Glutamate-1-semialdehyde 2,1-aminomutase 1 (437 aa).

Lys268 carries the N6-(pyridoxal phosphate)lysine modification.

It belongs to the class-III pyridoxal-phosphate-dependent aminotransferase family. HemL subfamily. In terms of assembly, homodimer. Requires pyridoxal 5'-phosphate as cofactor.

It localises to the cytoplasm. The catalysed reaction is (S)-4-amino-5-oxopentanoate = 5-aminolevulinate. It functions in the pathway porphyrin-containing compound metabolism; protoporphyrin-IX biosynthesis; 5-aminolevulinate from L-glutamyl-tRNA(Glu): step 2/2. The chain is Glutamate-1-semialdehyde 2,1-aminomutase 1 from Halalkalibacterium halodurans (strain ATCC BAA-125 / DSM 18197 / FERM 7344 / JCM 9153 / C-125) (Bacillus halodurans).